Reading from the N-terminus, the 314-residue chain is Methionyl-tRNA formyltransferase (314 aa).

Ser110 to Pro113 is a (6S)-5,6,7,8-tetrahydrofolate binding site.

The protein belongs to the Fmt family.

The enzyme catalyses L-methionyl-tRNA(fMet) + (6R)-10-formyltetrahydrofolate = N-formyl-L-methionyl-tRNA(fMet) + (6S)-5,6,7,8-tetrahydrofolate + H(+). In terms of biological role, attaches a formyl group to the free amino group of methionyl-tRNA(fMet). The formyl group appears to play a dual role in the initiator identity of N-formylmethionyl-tRNA by promoting its recognition by IF2 and preventing the misappropriation of this tRNA by the elongation apparatus. The chain is Methionyl-tRNA formyltransferase from Bacillus cereus (strain G9842).